The following is a 1052-amino-acid chain: 3-hydroxy-3-methylglutaryl coenzyme A reductase mokG (1052 aa).

6 consecutive transmembrane segments (helical) span residues 223–243 (VDMAIIGLGYLALNMTLVSLF), 253–273 (FWLAASVLLSGAFAFVFGLGV), 279–299 (VPVDMLLLSEGIPFLVLTVGF), 349–369 (GWSIVQSYLLEIGALALGAVF), 378–398 (FCFLAAWMVLFDAILLFTFYA), and 440–460 (WKLIMVGGFVLFNVLQLSSFF). One can recognise an SSD domain in the interval 224-403 (DMAIIGLGYL…FTFYATILCV (180 aa)). A linker region spans residues 461–617 (YRIMGGFMTN…FKANQAESLT (157 aa)). Positions 571-594 (APKESAAPAPPSSPASVPSAVPVP) are disordered. Low complexity predominate over residues 584 to 594 (PASVPSAVPVP). The catalytic stretch occupies residues 618 to 1044 (DDELAELCLR…LVNAHMRHNR (427 aa)). Glu-734 (charge relay system) is an active-site residue. Asn-798 carries N-linked (GlcNAc...) asparagine glycosylation. Catalysis depends on charge relay system residues Lys-867 and Asp-943. Catalysis depends on His-1039, which acts as the Proton donor. Asn-1043 is a glycosylation site (N-linked (GlcNAc...) asparagine).

The protein belongs to the HMG-CoA reductase family.

It is found in the endoplasmic reticulum membrane. It catalyses the reaction (R)-mevalonate + 2 NADP(+) + CoA = (3S)-3-hydroxy-3-methylglutaryl-CoA + 2 NADPH + 2 H(+). Its pathway is polyketide biosynthesis; lovastatin biosynthesis. In terms of biological role, HMG-CoA reductase; part of the gene cluster that mediates the biosynthesis of monakolin K, also known as lovastatin, and which acts as a potent competitive inhibitor of HMG-CoA reductase. Monakolin K biosynthesis is performed in two stages. The first stage is catalyzed by the nonaketide synthase mokA, which belongs to type I polyketide synthases and catalyzes the iterative nine-step formation of the polyketide. This PKS stage is completed by the action of dehydrogenase mokE, which catalyzes the NADPH-dependent reduction of the unsaturated tetra-, penta- and heptaketide intermediates that arise during the mokA-mediated biosynthesis of the nonaketide chain and leads to dihydromonacolin L. Covalently bound dihydromonacolin L is released from mokA by the mokD esterase. Conversion of dihydromonacolin L into monacolin L and then monacolin J is subsequently performed with the participation of molecular oxygen and P450 monoogygenase mokC. Finally, mokF performs the conversion of monacoline J to monacoline K through the addition of the side-chain diketide moiety (2R)-2-methylbutanoate produced by the diketide synthase mokB. HMG-CoA reductase mokG may act as a down-regulator of monacolin K production. In Monascus pilosus (Red mold), this protein is 3-hydroxy-3-methylglutaryl coenzyme A reductase mokG.